The primary structure comprises 276 residues: Glutamate 5-kinase (276 aa).

K14 serves as a coordination point for ATP. Substrate-binding residues include S54, D141, and N157. ATP is bound by residues 177 to 178 and 219 to 225; these read SD and TGGMLTK.

It belongs to the glutamate 5-kinase family.

The protein resides in the cytoplasm. The enzyme catalyses L-glutamate + ATP = L-glutamyl 5-phosphate + ADP. It functions in the pathway amino-acid biosynthesis; L-proline biosynthesis; L-glutamate 5-semialdehyde from L-glutamate: step 1/2. Its function is as follows. Catalyzes the transfer of a phosphate group to glutamate to form L-glutamate 5-phosphate. In Listeria innocua serovar 6a (strain ATCC BAA-680 / CLIP 11262), this protein is Glutamate 5-kinase.